A 1382-amino-acid chain; its full sequence is Histone-lysine N-methyltransferase SUVR5 (1382 aa).

Disordered stretches follow at residues 43–62 and 354–373; these read TVTG…SEPK and GNTN…NTPE. 3 consecutive C2H2-type zinc fingers follow at residues 735 to 758, 769 to 792, and 838 to 861; these read FACA…EERH, LQCI…QAVH, and FVCK…QAEH. Residues 915–935 are disordered; that stretch reads RRMQGSKSLGTEGNTEAGVSP. Residues 919–928 are compositionally biased toward polar residues; that stretch reads GSKSLGTEGN. Positions 1145–1221 constitute a Pre-SET domain; sequence LRCSCRSSVC…TCQNRVLQNG (77 aa). Residues C1147, C1149, C1154, C1159, C1182, C1203, C1207, C1209, and C1213 each coordinate Zn(2+). The region spanning 1224-1356 is the SET domain; the sequence is AKLEVFRTES…AGEEITRDYG (133 aa). S-adenosyl-L-methionine contacts are provided by residues 1234-1236, Y1277, and 1313-1314; these read KGW and NH. C1316 lines the Zn(2+) pocket. S-adenosyl-L-methionine is bound at residue Y1355. The Post-SET domain occupies 1366–1382; that stretch reads NEHPCHCKATNCRGLLS. The Zn(2+) site is built by C1370, C1372, and C1377.

Belongs to the class V-like SAM-binding methyltransferase superfamily. As to quaternary structure, component of a regulatory complex with LDL1/SWP1. Interacts with LDL1/SWP1.

The protein resides in the nucleus. Its subcellular location is the chromosome. It catalyses the reaction L-lysyl-[histone] + S-adenosyl-L-methionine = N(6)-methyl-L-lysyl-[histone] + S-adenosyl-L-homocysteine + H(+). In terms of biological role, histone methyltransferase that functions together with its binding partner LDL1/SWP1 as one of the regulators of flower timing in Arabidopsis. Mediates H3K9me2 deposition and regulates gene expression in a DNA methylation-independent manner. Binds DNA through its zinc fingers and represses the expression of a subset of stimulus response genes. May represent a novel mechanism for plants to regulate their chromatin and transcriptional state, which may allow for the adaptability and modulation necessary to rapidly respond to environment or developmental cues. The protein is Histone-lysine N-methyltransferase SUVR5 of Arabidopsis thaliana (Mouse-ear cress).